Here is an 801-residue protein sequence, read N- to C-terminus: Phenylalanine--tRNA ligase beta subunit (801 aa).

The tRNA-binding domain maps to Ala39–Phe153. The B5 domain maps to Thr406 to Thr481. Mg(2+) contacts are provided by Asp459, Asp465, Glu468, and Glu469. One can recognise an FDX-ACB domain in the interval Thr708 to Arg801.

It belongs to the phenylalanyl-tRNA synthetase beta subunit family. Type 1 subfamily. Tetramer of two alpha and two beta subunits. Mg(2+) serves as cofactor.

The protein resides in the cytoplasm. The catalysed reaction is tRNA(Phe) + L-phenylalanine + ATP = L-phenylalanyl-tRNA(Phe) + AMP + diphosphate + H(+). This is Phenylalanine--tRNA ligase beta subunit from Streptococcus pyogenes serotype M1.